We begin with the raw amino-acid sequence, 335 residues long: Interleukin-12 subunit beta (335 aa).

The first 22 residues, 1–22, serve as a signal peptide directing secretion; sequence MCPQKLTISWFAIVLLVSPLMA. An Ig-like C2-type domain is found at 23-106; that stretch reads MWELEKDVYV…LSHSHLLLHK (84 aa). Asparagine 47 is a glycosylation site (N-linked (GlcNAc...) asparagine). Cysteine 50 and cysteine 90 form a disulfide bridge. 3 N-linked (GlcNAc...) asparagine glycosylation sites follow: asparagine 122, asparagine 132, and asparagine 220. One can recognise a Fibronectin type-III domain in the interval 233–324; that stretch reads PDPPKNLQMK…QDRYYNSSCS (92 aa).

This sequence belongs to the IL-12B family. As to quaternary structure, heterodimer with IL12A; disulfide-linked. The heterodimer is known as interleukin IL-12. Heterodimer with IL23A; disulfide-linked. The heterodimer is known as interleukin IL-23. Also secreted as a monomer. Interacts with NBR1; this interaction promotes IL-12 secretion.

The protein resides in the secreted. In terms of biological role, cytokine that can act as a growth factor for activated T and NK cells, enhance the lytic activity of NK/lymphokine-activated killer cells, and stimulate the production of IFN-gamma by resting PBMC. Associates with IL23A to form the IL-23 interleukin, a heterodimeric cytokine which functions in innate and adaptive immunity. IL-23 may constitute with IL-17 an acute response to infection in peripheral tissues. IL-23 binds to a heterodimeric receptor complex composed of IL12RB1 and IL23R, activates the Jak-Stat signaling cascade, stimulates memory rather than naive T-cells and promotes production of pro-inflammatory cytokines. IL-23 induces autoimmune inflammation and thus may be responsible for autoimmune inflammatory diseases and may be important for tumorigenesis. The chain is Interleukin-12 subunit beta (Il12b) from Mus musculus (Mouse).